The following is a 1129-amino-acid chain: Translation initiation factor IF-2 (1129 aa).

Low complexity-rich tracts occupy residues 33–42 (AARSHSSSIS) and 56–99 (GGSP…AAKP). 2 disordered regions span residues 33–462 (AARS…IGEN) and 485–515 (SLAR…ETAR). Positions 100-112 (SPKPSAPSRPEAP) are enriched in pro residues. The segment covering 135–147 (STPAAAAPAAAPS) has biased composition (low complexity). The segment covering 148 to 161 (APAPSAPTPRPKPT) has biased composition (pro residues). Over residues 162-175 (APKASAPAPTASAP) the composition is skewed to low complexity. 2 stretches are compositionally biased toward pro residues: residues 176 to 191 (SAPP…PAPA) and 211 to 221 (PTAPPTRPQPK). Residues 257–273 (GQRPGVSPRPSGPPGQR) are compositionally biased toward low complexity. Residues 431–445 (GRPDWDDSAKLEALR) show a composition bias toward basic and acidic residues. Composition is skewed to basic residues over residues 490–499 (SKPRTKHKPA) and 506–515 (IRKRRKETAR). One can recognise a tr-type G domain in the interval 621 to 793 (RRPPVVTVMG…ILLVTEVEDL (173 aa)). Positions 630–637 (GHVDHGKT) are G1. 630 to 637 (GHVDHGKT) serves as a coordination point for GTP. The tract at residues 655–659 (GITQH) is G2. The interval 680–683 (DTPG) is G3. GTP is bound by residues 680-684 (DTPGH) and 734-737 (NKID). Residues 734–737 (NKID) are G4. The tract at residues 770 to 772 (SAL) is G5.

Belongs to the TRAFAC class translation factor GTPase superfamily. Classic translation factor GTPase family. IF-2 subfamily.

Its subcellular location is the cytoplasm. Functionally, one of the essential components for the initiation of protein synthesis. Protects formylmethionyl-tRNA from spontaneous hydrolysis and promotes its binding to the 30S ribosomal subunits. Also involved in the hydrolysis of GTP during the formation of the 70S ribosomal complex. The chain is Translation initiation factor IF-2 from Synechococcus sp. (strain CC9311).